Consider the following 175-residue polypeptide: Protein SELF-PRUNING (175 aa).

This sequence belongs to the phosphatidylethanolamine-binding protein family.

The protein resides in the cytoplasm. Its function is as follows. Not known. In plants homozygous for the recessive allele of the SP gene, sympodial segments develop progressively fewer nodes until the shoot is terminated by two consecutive. inflorescences. In Solanum lycopersicum (Tomato), this protein is Protein SELF-PRUNING (SP).